Consider the following 96-residue polypeptide: DNA-binding protein HmvA (96 aa).

Residues K52–K55 are interaction with DNA.

This sequence belongs to the archaeal histone HMF family. Homodimer. Dimers then assemble into higher oligomers, with the DNA wrapped around the protein core.

The protein localises to the cytoplasm. It is found in the chromosome. Functionally, binds and compact DNA (95 to 150 base pairs) to form nucleosome-like structures that contain positive DNA supercoils. Increases the resistance of DNA to thermal denaturation (in vitro). The chain is DNA-binding protein HmvA (hmvA) from Methanocaldococcus jannaschii (strain ATCC 43067 / DSM 2661 / JAL-1 / JCM 10045 / NBRC 100440) (Methanococcus jannaschii).